The chain runs to 348 residues: Killer cell immunoglobulin-like receptor 2DL2 (348 aa).

Positions 1–21 are cleaved as a signal peptide; it reads MSLMVVSMACVGFFLLQGAWP. The Extracellular portion of the chain corresponds to 22–245; that stretch reads HEGVHRKPSL…SKTGNPRHLH (224 aa). Ig-like C2-type domains follow at residues 42–107 and 142–205; these read EETV…VTHS and GESV…FRDS. 2 disulfides stabilise this stretch: Cys49/Cys100 and Cys149/Cys198. N-linked (GlcNAc...) asparagine glycosylation is found at Asn84, Asn178, and Asn211. Residues 246–264 traverse the membrane as a helical segment; that stretch reads ILIGTSVVIILFILLFFLL. Residues 265 to 348 are Cytoplasmic-facing; sequence HRWCSNKKNA…ESRSKVVSCP (84 aa).

It belongs to the immunoglobulin superfamily.

The protein localises to the cell membrane. Functionally, receptor on natural killer (NK) cells for HLA-Cw1, 3, 7, and 8 allotypes. Inhibits the activity of NK cells thus preventing cell lysis. This Homo sapiens (Human) protein is Killer cell immunoglobulin-like receptor 2DL2.